Consider the following 276-residue polypeptide: Tryptase beta-2 (276 aa).

Residues 1–21 (MLKRRLLLLWALSLLASLVYS) form the signal peptide. The propeptide at 22–31 (APRPANQRVG) is activation peptide. The region spanning 32 to 273 (IVGGHEASES…YLDWIHRYVP (242 aa)) is the Peptidase S1 domain. C60 and C76 are disulfide-bonded. H75 (charge relay system) is an active-site residue. Y98 is modified (phosphotyrosine). Residue D122 is the Charge relay system of the active site. N133 carries an N-linked (GlcNAc...) asparagine glycan. Cystine bridges form between C156-C231, C189-C212, and C221-C249. Catalysis depends on S225, which acts as the Charge relay system.

This sequence belongs to the peptidase S1 family. Tryptase subfamily. Homotetramer. The active tetramer is converted to inactive monomers at neutral and acidic pH in the absence of heparin. Low concentrations of inactive monomers become active monomers at pH 6.0 in the presence of heparin. When the concentration of active monomers is higher, they convert to active monomers and then to active tetramers. These monomers are active and functionally distinct from the tetrameric enzyme. In contrast to the hidden active sites in the tetrameric form, the active site of the monomeric form is accessible for macromolecular proteins and inhibitors, e.g. fibrinogen which is a substrate for the monomeric but not for the tetrameric form. The monomeric form forms a complex with SERPINB6. During embryogenesis, detected primarily in skin.

Its subcellular location is the secreted. The catalysed reaction is Preferential cleavage: Arg-|-Xaa, Lys-|-Xaa, but with more restricted specificity than trypsin.. Its function is as follows. Tryptase is the major neutral protease present in mast cells and is secreted upon the coupled activation-degranulation response of this cell type. Plays a role in innate immunity. This Mus musculus (Mouse) protein is Tryptase beta-2 (Tpsb2).